The sequence spans 537 residues: Endoprotease aex-5 (537 aa).

The signal sequence occupies residues 1–17; it reads MKLIFLLLLFGVSPIVC. Positions 18 to 99 are excised as a propeptide; that stretch reads QDFEDGVFLA…KLQGFRRYKR (82 aa). Positions 111–413 constitute a Peptidase S8 domain; it reads VWNLTPSLYI…FGLLNAQKLV (303 aa). Asn129 carries an N-linked (GlcNAc...) asparagine glycan. Catalysis depends on charge relay system residues Asp139 and His178. A disulfide bond links Cys286 and Cys316. Ser346 acts as the Charge relay system in catalysis. The N-linked (GlcNAc...) asparagine glycan is linked to Asn380. Positions 407–537 constitute a P/Homo B domain; it reads LNAQKLVVMA…KMFKVVGTMS (131 aa).

It belongs to the peptidase S8 family. Furin subfamily.

The protein localises to the secreted. Functionally, probable serine endoprotease which cleaves preproteins at paired basic amino acids. May process FMRFamide-like (flp) and neuropeptide-like protein (nlp) neuropeptides. In muscles, involved in neuronal retrograde signaling by regulating presynaptic activity and localization of synaptic vesicle fusion protein unc-13 at the neuromuscular junction (NMJ). Acts in the intestine to regulate anterior body muscle contractions (aBOC) and the expulsion steps during the defecation motor program (DMP). Probably by regulating DMP, required for fatty acid uptake by intestinal cells and therefore regulates the levels of triglycerides in the intestine. Plays a role in locomotion. This chain is Endoprotease aex-5, found in Caenorhabditis elegans.